A 438-amino-acid chain; its full sequence is MAATTTIPLLLLLLAATVAAAAAELSVYHNVHPSSPSPLESIIALARDDDARLLFLSSKAATAGVSSAPVASGQAPPSYVVRAGLGSPSQQLLLALDTSADATWAHCSPCGTCPSSSLFAPANSSSYASLPCSSSWCPLFQGQACPAPQGGGDAAPPPATLPTCAFSKPFADASFQAALASDTLRLGKDAIPNYTFGCVSSVTGPTTNMPRQGLLGLGRGPMALLSQAGSLYNGVFSYCLPSYRSYYFSGSLRLGAGGGQPRSVRYTPMLRNPHRSSLYYVNVTGLSVGHAWVKVPAGSFAFDAATGAGTVVDSGTVITRWTAPVYAALREEFRRQVAAPSGYTSLGAFDTCFNTDEVAAGGAPAVTVHMDGGVDLALPMENTLIHSSATPLACLAMAEAPQNVNSVVNVIANLQQQNIRVVFDVANSRVGFAKESCN.

The N-terminal stretch at 1–23 is a signal peptide; that stretch reads MAATTTIPLLLLLLAATVAAAAA. A Peptidase A1 domain is found at 79 to 433; it reads YVVRAGLGSP…DVANSRVGFA (355 aa). Residue Asp-97 is part of the active site. Cys-107 and Cys-113 form a disulfide bridge. Asn-123, Asn-193, and Asn-282 each carry an N-linked (GlcNAc...) asparagine glycan. Asp-313 is a catalytic residue. Cysteines 352 and 394 form a disulfide.

It belongs to the peptidase A1 family.

Its function is as follows. Anther-specific aspartic protease involved in tapetal programmed cell death (PCD). Directly regulated by the transcription factor EAT1/DTD in anthers during tapetum PCD and degeneration. This is Aspartyl protease 25 from Oryza sativa subsp. japonica (Rice).